The following is a 496-amino-acid chain: Glutathione reductase, cytosolic (496 aa).

FAD contacts are provided by S32, G33, E52, T69, C70, and K78. A glutathione-binding site is contributed by S32. C70 and C75 are disulfide-bonded. Residue Y127 coordinates glutathione. G143 is a binding site for FAD. NADP(+)-binding residues include G208, I211, E214, R231, R237, and G294. Residues D335 and T343 each coordinate FAD. Position 373 (A373) interacts with NADP(+). H469 contributes to the FAD binding site. The Proton acceptor role is filled by H469.

It belongs to the class-I pyridine nucleotide-disulfide oxidoreductase family. Homodimer. FAD serves as cofactor.

Its subcellular location is the cytoplasm. It catalyses the reaction 2 glutathione + NADP(+) = glutathione disulfide + NADPH + H(+). Its function is as follows. Catalyzes the reduction of glutathione disulfide (GSSG) to reduced glutathione (GSH). Constitutes the major mechanism to maintain a high GSH:GSSG ratio in the cytosol. This Oryza sativa subsp. japonica (Rice) protein is Glutathione reductase, cytosolic (GRC2).